Here is a 50-residue protein sequence, read N- to C-terminus: MTEQEEKVSFGITIPKSLKTRLKIYCAQNDKKIQDVIREALEEYLQRREK.

This is an uncharacterized protein from Sulfolobus islandicus filamentous virus (isolate Iceland/Hveragerdi) (SIFV).